Here is a 242-residue protein sequence, read N- to C-terminus: Peptidyl-prolyl cis-trans isomerase FKBP20-2, chloroplastic (242 aa).

Residues 1-31 (MVTILSTPLSPRLTFLCETKLSLSRSNRSVC) constitute a chloroplast transit peptide. The N-terminal 36 residues, 32–67 (CSLSEEPKDQCLSRRSLVYVLVASPCLLLPALSSSA), are a transit peptide targeting the thylakoid. Residues 138-225 (GQQVTFHYIG…VFDVELLSIQ (88 aa)) enclose the PPIase FKBP-type domain. A disulfide bond links cysteine 227 and cysteine 241.

The protein belongs to the FKBP-type PPIase family. As to quaternary structure, interacts in vitro with LTO1.

It is found in the plastid. It localises to the chloroplast thylakoid lumen. It carries out the reaction [protein]-peptidylproline (omega=180) = [protein]-peptidylproline (omega=0). Functionally, PPIases accelerate the folding of proteins. It catalyzes the cis-trans isomerization of proline imidic peptide bonds in oligopeptides. Involved in the accumulation of the PSII complex. The polypeptide is Peptidyl-prolyl cis-trans isomerase FKBP20-2, chloroplastic (Arabidopsis thaliana (Mouse-ear cress)).